The primary structure comprises 444 residues: Exodeoxyribonuclease 7 large subunit (444 aa).

It belongs to the XseA family. In terms of assembly, heterooligomer composed of large and small subunits.

The protein localises to the cytoplasm. The enzyme catalyses Exonucleolytic cleavage in either 5'- to 3'- or 3'- to 5'-direction to yield nucleoside 5'-phosphates.. Bidirectionally degrades single-stranded DNA into large acid-insoluble oligonucleotides, which are then degraded further into small acid-soluble oligonucleotides. The polypeptide is Exodeoxyribonuclease 7 large subunit (Rickettsia akari (strain Hartford)).